A 407-amino-acid chain; its full sequence is [Pyruvate dehydrogenase (acetyl-transferring)] kinase isozyme 2, mitochondrial (407 aa).

The region spanning 135–364 (LEYKDTYGDD…DAVIYLKALS (230 aa)) is the Histidine kinase domain. Y215 and Y216 each carry phosphotyrosine. Residues 251–258 (ELFKNAMR), D290, 309–310 (ST), and 325–330 (GFGYGL) contribute to the ATP site. K376 is subject to N6-succinyllysine.

This sequence belongs to the PDK/BCKDK protein kinase family. As to quaternary structure, homodimer, and heterodimer with PDK1. Interacts with the pyruvate dehydrogenase complex subunit DLAT, and is part of the multimeric pyruvate dehydrogenase complex that contains multiple copies of pyruvate dehydrogenase (E1), dihydrolipoamide acetyltransferase (DLAT, E2) and lipoamide dehydrogenase (DLD, E3). In terms of tissue distribution, detected in heart (at protein level).

It is found in the mitochondrion matrix. It carries out the reaction L-seryl-[pyruvate dehydrogenase E1 alpha subunit] + ATP = O-phospho-L-seryl-[pyruvate dehydrogenase E1 alpha subunit] + ADP + H(+). Its function is as follows. Kinase that plays a key role in the regulation of glucose and fatty acid metabolism and homeostasis via phosphorylation of the pyruvate dehydrogenase subunits PDHA1 and PDHA2. This inhibits pyruvate dehydrogenase activity, and thereby regulates metabolite flux through the tricarboxylic acid cycle, down-regulates aerobic respiration and inhibits the formation of acetyl-coenzyme A from pyruvate. Inhibition of pyruvate dehydrogenase decreases glucose utilization and increases fat metabolism. Mediates cellular responses to insulin. Plays an important role in maintaining normal blood glucose levels and in metabolic adaptation to nutrient availability. Via its regulation of pyruvate dehydrogenase activity, plays an important role in maintaining normal blood pH and in preventing the accumulation of ketone bodies under starvation. Plays a role in the regulation of cell proliferation and in resistance to apoptosis under oxidative stress. Plays a role in p53/TP53-mediated apoptosis. The chain is [Pyruvate dehydrogenase (acetyl-transferring)] kinase isozyme 2, mitochondrial (Pdk2) from Mus musculus (Mouse).